The chain runs to 142 residues: Small ribosomal subunit protein bS6 (142 aa).

Residues 110-133 (NKKPSHAKEKHEKTEHTHSHHLEE) are compositionally biased toward basic and acidic residues. The segment at 110-142 (NKKPSHAKEKHEKTEHTHSHHLEEAESVGSHSE) is disordered.

It belongs to the bacterial ribosomal protein bS6 family.

Functionally, binds together with bS18 to 16S ribosomal RNA. In Helicobacter pylori (strain HPAG1), this protein is Small ribosomal subunit protein bS6.